The primary structure comprises 162 residues: Protein-export protein SecB (162 aa).

This sequence belongs to the SecB family. In terms of assembly, homotetramer, a dimer of dimers. One homotetramer interacts with 1 SecA dimer.

It is found in the cytoplasm. In terms of biological role, one of the proteins required for the normal export of preproteins out of the cell cytoplasm. It is a molecular chaperone that binds to a subset of precursor proteins, maintaining them in a translocation-competent state. It also specifically binds to its receptor SecA. This Legionella pneumophila (strain Paris) protein is Protein-export protein SecB.